Consider the following 304-residue polypeptide: Porphobilinogen deaminase (304 aa).

S-(dipyrrolylmethanemethyl)cysteine is present on cysteine 241.

The protein belongs to the HMBS family. Monomer. The cofactor is dipyrromethane.

It carries out the reaction 4 porphobilinogen + H2O = hydroxymethylbilane + 4 NH4(+). It participates in porphyrin-containing compound metabolism; protoporphyrin-IX biosynthesis; coproporphyrinogen-III from 5-aminolevulinate: step 2/4. Functionally, tetrapolymerization of the monopyrrole PBG into the hydroxymethylbilane pre-uroporphyrinogen in several discrete steps. The sequence is that of Porphobilinogen deaminase from Ruthia magnifica subsp. Calyptogena magnifica.